The following is a 179-amino-acid chain: Large ribosomal subunit protein uL6c (179 aa).

Belongs to the universal ribosomal protein uL6 family. In terms of assembly, part of the 50S ribosomal subunit.

Its subcellular location is the plastid. It is found in the cyanelle. Functionally, binds 23S rRNA. In Cyanophora paradoxa, this protein is Large ribosomal subunit protein uL6c (rpl6).